Consider the following 683-residue polypeptide: Solute carrier organic anion transporter family member 2B1 (683 aa).

The tract at residues 1–30 (MPDRSTKTTMGTEDMHERKVSVEPQDSHQD) is disordered. The Cytoplasmic segment spans residues 1–41 (MPDRSTKTTMGTEDMHERKVSVEPQDSHQDAQPRGMFHNIK). Residues 13 to 30 (EDMHERKVSVEPQDSHQD) show a composition bias toward basic and acidic residues. The residue at position 21 (Ser21) is a Phosphoserine. The chain crosses the membrane as a helical span at residues 42-61 (FFVLCHSLLQLTQLMISGYL). Topologically, residues 62–80 (KSSISTVEKRFGLSSQISG) are extracellular. A helical membrane pass occupies residues 81–101 (LLAAFNEVGNVSLILFVSYFG). Over 102–107 (SRVHRP) the chain is Cytoplasmic. Residues 108–132 (RMIGYGALLVATAGLLMALPHFISE) traverse the membrane as a helical segment. Residues 133 to 177 (PYRYDHSSSDNRSLDFEASLCLPTTMAPASALSNGSCSSHTETKH) lie on the Extracellular side of the membrane. Asn143 and Asn166 each carry an N-linked (GlcNAc...) asparagine glycan. Residues 178-207 (LTMVGIMFAAQTLLGIGGVPIQPFGISYID) traverse the membrane as a helical segment. The Cytoplasmic segment spans residues 208-226 (DFAHHSNSPLYIGILFGIT). The helical transmembrane segment at 227–247 (TMGPGLAYGLGSLMLRLYVDI) threads the bilayer. The Extracellular segment spans residues 248–265 (DRMPEGGINLTPKDPRWV). A helical transmembrane segment spans residues 266–290 (GAWWLGFLISSGLVVLASSPYFFFP). Over 291-355 (REMPKEKHEF…VKVFPRVLLR (65 aa)) the chain is Cytoplasmic. Residues Ser312 and Ser315 each carry the phosphoserine modification. A helical transmembrane segment spans residues 356 to 377 (NLRHPIFLLVVLSQVCTSSMVA). Topologically, residues 378-397 (GMATFLPKFLERQFSITASF) are extracellular. Residues 398–421 (ANMLLGCLTIPLVIVGIMMGGVLV) form a helical membrane-spanning segment. Topologically, residues 422–425 (KRLH) are cytoplasmic. A helical membrane pass occupies residues 426 to 449 (LSPVQCSALCLLGSLLCLLFSVPL). Over 450–553 (FFIGCSTHQI…SACSRLVLPF (104 aa)) the chain is Extracellular. The 61-residue stretch at 472-532 (PSLFPGCSEP…VFYTNCSCVA (61 aa)) folds into the Kazal-like domain. Disulfide bonds link Cys478–Cys509, Cys484–Cys505, and Cys493–Cys530. Asn527 and Asn534 each carry an N-linked (GlcNAc...) asparagine glycan. A helical transmembrane segment spans residues 554–576 (IVLFSLGAGLASITHTPSFMLIL). The Cytoplasmic portion of the chain corresponds to 577–585 (RGVKKEDKT). The helical transmembrane segment at 586–611 (LAVGMQFMLLRVLAWMPSPVIHGSAI) threads the bilayer. Residues 612–644 (DTTCVHWALTCGRRAVCRYYDHDLLRNRFIGLQ) are Extracellular-facing. Residues 645–662 (FFFKSGSLVCFTLVLAIL) form a helical membrane-spanning segment. Residues 663–683 (RQQSREASTRTTVKSSELQQL) lie on the Cytoplasmic side of the membrane.

Belongs to the organo anion transporter (TC 2.A.60) family. In terms of tissue distribution, expressed in liver, kidney, small intestine mucosa, large intestine, brain, lung, spleen, stomach and heart.

It localises to the cell membrane. Its subcellular location is the basal cell membrane. The protein resides in the apical cell membrane. The catalysed reaction is dehydroepiandrosterone 3-sulfate(out) = dehydroepiandrosterone 3-sulfate(in). The enzyme catalyses estrone 3-sulfate(out) = estrone 3-sulfate(in). It catalyses the reaction estrone 3-sulfate(out) + hydrogencarbonate(in) = estrone 3-sulfate(in) + hydrogencarbonate(out). It carries out the reaction taurocholate(out) = taurocholate(in). The catalysed reaction is coproporphyrin III(out) = coproporphyrin III(in). The enzyme catalyses substance P(out) = substance P(in). It catalyses the reaction pregnenolone sulfate(out) = pregnenolone sulfate(in). It carries out the reaction prostaglandin E2(out) = prostaglandin E2(in). The catalysed reaction is prostaglandin D2(out) = prostaglandin D2(in). The enzyme catalyses L-thyroxine(out) = L-thyroxine(in). Mediates the Na(+)-independent transport of steroid sulfate conjugates such as estrone 3-sulfate (E1S), dehydroepiandrosterone sulfate (DHEA-S) and pregnenolone sulfate (PregS) and other specific organic anions. Responsible for the transport of E1S through the basal membrane of syncytiotrophoblast, highlighting a potential role in the placental absorption of fetal-derived sulfated steroids including DHEA-S. Also facilitates the uptake of sulfated steroids at the basal/sinusoidal membrane of hepatocytes, therefore accounting for the major part of organic anions clearance of liver. Mediates the intestinal uptake of sulfated steroids. Mediates the uptake of the neurosteroids DHEA-S and PregS into the endothelial cells of the blood-brain barrier as the first step to enter the brain. Also plays a role in the reuptake of neuropeptides such as substance P/TAC1 and vasoactive intestinal peptide/VIP released from retinal neurons. May act as a heme transporter that promotes cellular iron availability. Also transports heme by-product coproporphyrin III (CPIII), and may be involved in their hepatic disposition. Mediates the uptake of other substrates such as prostaglandins D2 (PGD2), E1 (PGE1) and E2 (PGE2), taurocholate, L-thyroxine, leukotriene C4 and thromboxane B2. May contribute to regulate the transport of organic compounds in testis across the blood-testis-barrier. Shows a pH-sensitive substrate specificity which may be ascribed to the protonation state of the binding site and leads to a stimulation of substrate transport in an acidic microenvironment. The exact transport mechanism has not been yet deciphered but most likely involves an anion exchange, coupling the cellular uptake of organic substrate with the efflux of an anionic compound. Hydrogencarbonate/HCO3(-) acts as a probable counteranion that exchanges for organic anions. Cytoplasmic glutamate may also act as counteranion in the placenta. An inwardly directed proton gradient has also been proposed as the driving force of E1S uptake with a (H(+):E1S) stoichiometry of (1:1). The protein is Solute carrier organic anion transporter family member 2B1 of Mus musculus (Mouse).